Reading from the N-terminus, the 1355-residue chain is Phospholipid-transporting ATPase DRS2 (1355 aa).

A compositionally biased stretch (basic and acidic residues) spans 1-15 (MNDDRETPPKRKPGE). The tract at residues 1-50 (MNDDRETPPKRKPGEDDTLFDIDFLDDTTSHSGSRSKVTNSHANANYIPP) is disordered. An involved in autoinhibition region spans residues 1–104 (MNDDRETPPK…SDAYQPQSLR (104 aa)). At 1-221 (MNDDRETPPK…TFLPKFLFQE (221 aa)) the chain is on the cytoplasmic side. Positions 16–26 (DDTLFDIDFLD) are enriched in acidic residues. Over residues 30–44 (SHSGSRSKVTNSHAN) the composition is skewed to polar residues. Residue serine 102 is modified to Phosphoserine. A helical transmembrane segment spans residues 222–242 (FSKYANLFFLCTSAIQQVPHV). The interval 237 to 238 (QQ) is involved in phosphatidylserine substrate recognition. Over 243–246 (SPTN) the chain is Lumenal. The helical transmembrane segment at 247-267 (RYTTIGTLLVVLIVSAMKECI) threads the bilayer. Residues 268 to 449 (EDIKRANSDK…VEKIINRQII (182 aa)) are Cytoplasmic-facing. Residues 450–470 (ALFTVLIVLILISSIGNVIMS) form a helical membrane-spanning segment. Topologically, residues 471 to 490 (TADAKHLSYLYLEGTNKAGL) are lumenal. A helical transmembrane segment spans residues 491-511 (FFKDFLTFWILFSNLVPISLF). The Cytoplasmic segment spans residues 512-1012 (VTVELIKYYQ…WSYQRISVAI (501 aa)). The 4-aspartylphosphate intermediate role is filled by aspartate 560. The ATP site is built by aspartate 560, lysine 561, threonine 562, glutamate 655, phenylalanine 698, serine 700, lysine 703, lysine 721, arginine 755, threonine 756, threonine 835, glycine 836, aspartate 837, arginine 928, and lysine 934. Residue aspartate 560 coordinates Mg(2+). Threonine 562 provides a ligand contact to Mg(2+). Residue aspartate 954 participates in Mg(2+) binding. ATP-binding residues include asparagine 957 and aspartate 958. Aspartate 958 is a binding site for Mg(2+). A helical transmembrane segment spans residues 1013–1033 (LYSFYKNTALYMTQFWYVFAN). Topologically, residues 1034–1043 (AFSGQSIMES) are lumenal. A helical transmembrane segment spans residues 1044–1064 (WTMSFYNLFFTVWPPFVIGVF). Over 1065–1094 (DQFVSSRLLERYPQLYKLGQKGQFFSVYIF) the chain is Cytoplasmic. A helical transmembrane segment spans residues 1095–1115 (WGWIINGFFHSAIVFIGTILI). At 1116–1131 (YRYGFALNMHGELADH) the chain is on the lumenal side. The helical transmembrane segment at 1132–1152 (WSWGVTVYTTSVIIVLGKAAL) threads the bilayer. Position 1149 (lysine 1149) interacts with a 1,2-diacyl-sn-glycero-3-phospho-(1D-myo-inositol 4-phosphate). Residues 1153-1161 (VTNQWTKFT) are Cytoplasmic-facing. A helical membrane pass occupies residues 1162–1182 (LIAIPGSLLFWLIFFPIYASI). Residues 1183–1202 (FPHANISREYYGVVKHTYGS) are Lumenal-facing. The chain crosses the membrane as a helical span at residues 1203 to 1223 (GVFWLTLIVLPIFALVRDFLW). A 1,2-diacyl-sn-glycero-3-phospho-(1D-myo-inositol 4-phosphate) is bound by residues arginine 1219, tryptophan 1223, lysine 1224, tyrosine 1235, and histidine 1236. The Cytoplasmic segment spans residues 1224–1355 (KYYKRMYEPE…SSRDDISFDI (132 aa)). The interaction with GEA2 stretch occupies residues 1230–1282 (YEPETYHVIQEMQKYNISDSRPHVQQFQNAIRKVRQVQRMKKQRGFAFSQAEE). An involved in autoinhibition region spans residues 1231 to 1309 (EPETYHVIQE…KYGELQDASA (79 aa)). Residues 1305–1355 (QDASANPFNDNNGLGSNDFESAEPFIENPFADGNQNSNRFSSSRDDISFDI) form a disordered region. The segment covering 1307–1323 (ASANPFNDNNGLGSNDF) has biased composition (polar residues). Positions 1346–1355 (SSRDDISFDI) are enriched in basic and acidic residues.

It belongs to the cation transport ATPase (P-type) (TC 3.A.3) family. Type IV subfamily. In terms of assembly, component of a flippase complex consisting of DRS2 and CDC50. Interacts with CDC50; the interaction is direct, is required for their mutual export from the endoplasmic reticulum, and preferentially occurs when DRS2 is in the E2P state. Interacts (via C-terminus) with GEA2 (via SEC7 domain); the interaction is direct. Interacts with GEA1. Requires Mg(2+) as cofactor.

Its subcellular location is the golgi apparatus. The protein resides in the trans-Golgi network membrane. The protein localises to the endosome membrane. The enzyme catalyses ATP + H2O + phospholipidSide 1 = ADP + phosphate + phospholipidSide 2.. The catalysed reaction is a 1,2-diacyl-sn-glycero-3-phospho-L-serine(out) + ATP + H2O = a 1,2-diacyl-sn-glycero-3-phospho-L-serine(in) + ADP + phosphate + H(+). It carries out the reaction a 1,2-diacyl-sn-glycero-3-phosphoethanolamine(out) + ATP + H2O = a 1,2-diacyl-sn-glycero-3-phosphoethanolamine(in) + ADP + phosphate + H(+). Its activity is regulated as follows. Allosterically activated by binding 1,2-diacyl-sn-glycero-3-phospho-(1D-myo-inositol 4-phosphate) (phosphatidylinositol 4-phosphate). Inhibited by orthovanadate, N-ethylmaleimide, trifluoroberyllate and tetrafluoroaluminate; orthovanadate and N-ethylmaleimide inhibit phosphorylation of the active site aspartic acid. The ATPase activity is not potently stimulated by phosphatidylinositol 3-phosphate and phosphatidylinositol 5-phosphate, phosphatidylinositol 4,5-bisphosphate or phosphatidylcholine. Not inhibited by azide. Its function is as follows. Catalytic component of a P4-ATPase flippase complex which catalyzes the hydrolysis of ATP coupled to the transport of phosphatidylserine and small amounts of ethanolamine from the lumen to the cytosolic leaflet of the trans-Golgi network and ensures the maintenance of asymmetric distribution of phospholipids. Contributes to clathrin-coated vesicle formation, endocytosis, and protein trafficking between the Golgi and endosomal system. Does not appear to transport phosphatidylcholine or sphingomyelin. In Saccharomyces cerevisiae (strain ATCC 204508 / S288c) (Baker's yeast), this protein is Phospholipid-transporting ATPase DRS2.